The chain runs to 520 residues: Transactivator/viroplasmin protein (520 aa).

The interval 487–520 (QNASADSGPKDGPPPTRSIVEKEDVPTTSSKQVD) is disordered.

Belongs to the caulimoviridae viroplasmin family.

It is found in the host cytoplasm. Enhances the ribosomal termination-reinitiation event leading to the translation of major open reading frames on the polycistronic viral RNAs. In Arabidopsis thaliana (Mouse-ear cress), this protein is Transactivator/viroplasmin protein.